The following is a 434-amino-acid chain: Gamma-glutamyl phosphate reductase (434 aa).

This sequence belongs to the gamma-glutamyl phosphate reductase family.

It localises to the cytoplasm. It catalyses the reaction L-glutamate 5-semialdehyde + phosphate + NADP(+) = L-glutamyl 5-phosphate + NADPH + H(+). The protein operates within amino-acid biosynthesis; L-proline biosynthesis; L-glutamate 5-semialdehyde from L-glutamate: step 2/2. Catalyzes the NADPH-dependent reduction of L-glutamate 5-phosphate into L-glutamate 5-semialdehyde and phosphate. The product spontaneously undergoes cyclization to form 1-pyrroline-5-carboxylate. The protein is Gamma-glutamyl phosphate reductase of Nostoc sp. (strain PCC 7120 / SAG 25.82 / UTEX 2576).